Here is a 677-residue protein sequence, read N- to C-terminus: Heat shock transcription factor (677 aa).

Disordered regions lie at residues 1-56 and 115-164; these read MGHN…DDSN and STSS…SQQP. Composition is skewed to polar residues over residues 115–131 and 143–164; these read STSS…TNAT and QPSS…SQQP. A DNA-binding region spans residues 193 to 297; that stretch reads ARPAFVNKLW…EYLLENIVRQ (105 aa). The segment at 320-373 is involved in trimerization; that stretch reads ELETVKYNQLAIAEDLKRITKDNEMLWKENMMARERHQSQQQVLEKLLRFLSSV. Low complexity-rich tracts occupy residues 400–416 and 457–501; these read NHMS…INPN and RSMS…QGQQ. Disordered stretches follow at residues 400 to 444, 457 to 541, and 606 to 677; these read NHMS…VPLQ, RSMS…NQYS, and KLNP…RRAA. The interval 466-677 is activatory; the sequence is NLNQRQSPQN…NNGQKRRRAA (212 aa). 2 stretches are compositionally biased toward polar residues: residues 502–541 and 629–641; these read FSYP…NQYS and FANT…SEQP. A compositionally biased stretch (basic and acidic residues) spans 650 to 669; the sequence is EELRNSRLHEPDRSFEEKNN.

It belongs to the HSF family. As to quaternary structure, homotrimer. Homotrimerization increases the affinity of HSF1 to DNA. Post-translationally, exhibits temperature-dependent phosphorylation.

It localises to the nucleus. DNA-binding transcription factor that specifically binds heat shock promoter elements (HSE) and activates transcription. This Kluyveromyces lactis (strain ATCC 8585 / CBS 2359 / DSM 70799 / NBRC 1267 / NRRL Y-1140 / WM37) (Yeast) protein is Heat shock transcription factor.